Here is a 1047-residue protein sequence, read N- to C-terminus: Suppression of tumorigenicity 18 protein (1047 aa).

Disordered stretches follow at residues 41 to 92 (TAED…HSTA), 168 to 221 (FLIH…VPKY), and 251 to 286 (DSET…SESL). Basic residues predominate over residues 52–65 (NKRKSLLMKPRHYS). Residues 171–181 (HSDDGRDKIDD) are compositionally biased toward basic and acidic residues. 2 CCHHC-type zinc fingers span residues 359–402 (PRPE…PLEI) and 403–446 (LAMH…KLAM). Residues Cys-368, Cys-373, His-386, Cys-392, Cys-412, Cys-417, His-430, and Cys-436 each contribute to the Zn(2+) site. 2 disordered regions span residues 523–563 (GRKT…SYSY) and 672–710 (YSKT…SPKP). Residues 550-563 (AHTQSPGRASSYSY) are compositionally biased toward polar residues. The span at 677-687 (GKTEEEKEKDP) shows a compositional bias: basic and acidic residues. 4 CCHHC-type zinc fingers span residues 715–758 (RDLK…LKSL), 759–802 (MAAN…GVKM), 807–850 (EEKE…QKEN), and 860–903 (KLNK…IKKG). Residues Cys-724, Cys-729, His-742, Cys-748, Cys-768, Cys-773, His-786, Cys-792, Cys-816, Cys-821, His-834, Cys-840, Cys-869, Cys-874, His-887, and Cys-893 each coordinate Zn(2+). The stretch at 920-992 (IESDEEIRHL…AGLSQALISS (73 aa)) forms a coiled coil.

Belongs to the MYT1 family. As to expression, detected at low levels in heart, liver, kidney, skeletal muscle, pancreas, testis, ovary and prostate. Detected at even lower levels in mammary epithelial cells and breast cancer cells.

Its subcellular location is the nucleus. Functionally, repressor that binds to DNA sequences containing a bipartite element consisting of a direct repeat of the sequence 5'-AAAGTTT-3' separated by 2-9 nucleotides. Represses basal transcription activity from target promoters. Inhibits colony formation in cultured breast cancer cells. The sequence is that of Suppression of tumorigenicity 18 protein (ST18) from Homo sapiens (Human).